The following is a 269-amino-acid chain: Shikimate dehydrogenase (NADP(+)) (269 aa).

Shikimate contacts are provided by residues 17-19 and threonine 64; that span reads SKS. Lysine 68 functions as the Proton acceptor in the catalytic mechanism. Glutamate 80 contacts NADP(+). The shikimate site is built by asparagine 89 and aspartate 105. NADP(+)-binding positions include 130 to 134, 154 to 159, and methionine 213; these read GAGGA and NRTHTK. Tyrosine 215 serves as a coordination point for shikimate. Residue glycine 237 coordinates NADP(+).

It belongs to the shikimate dehydrogenase family. As to quaternary structure, homodimer.

The enzyme catalyses shikimate + NADP(+) = 3-dehydroshikimate + NADPH + H(+). Its pathway is metabolic intermediate biosynthesis; chorismate biosynthesis; chorismate from D-erythrose 4-phosphate and phosphoenolpyruvate: step 4/7. Functionally, involved in the biosynthesis of the chorismate, which leads to the biosynthesis of aromatic amino acids. Catalyzes the reversible NADPH linked reduction of 3-dehydroshikimate (DHSA) to yield shikimate (SA). This chain is Shikimate dehydrogenase (NADP(+)), found in Neisseria mucosa.